A 274-amino-acid polypeptide reads, in one-letter code: Cytochrome c oxidase subunit 3 (274 aa).

The next 7 membrane-spanning stretches (helical) occupy residues proline 22 to methionine 42, phenylalanine 47 to leucine 67, glycine 93 to phenylalanine 113, proline 137 to valine 157, threonine 170 to valine 190, phenylalanine 208 to valine 228, and alanine 248 to tyrosine 268.

The protein belongs to the cytochrome c oxidase subunit 3 family. Component of the cytochrome c oxidase (complex IV, CIV), a multisubunit enzyme composed of a catalytic core of 3 subunits and several supernumerary subunits. The complex exists as a monomer or a dimer and forms supercomplexes (SCs) in the inner mitochondrial membrane with ubiquinol-cytochrome c oxidoreductase (cytochrome b-c1 complex, complex III, CIII).

The protein resides in the mitochondrion inner membrane. It carries out the reaction 4 Fe(II)-[cytochrome c] + O2 + 8 H(+)(in) = 4 Fe(III)-[cytochrome c] + 2 H2O + 4 H(+)(out). Its function is as follows. Component of the cytochrome c oxidase, the last enzyme in the mitochondrial electron transport chain which drives oxidative phosphorylation. The respiratory chain contains 3 multisubunit complexes succinate dehydrogenase (complex II, CII), ubiquinol-cytochrome c oxidoreductase (cytochrome b-c1 complex, complex III, CIII) and cytochrome c oxidase (complex IV, CIV), that cooperate to transfer electrons derived from NADH and succinate to molecular oxygen, creating an electrochemical gradient over the inner membrane that drives transmembrane transport and the ATP synthase. Cytochrome c oxidase is the component of the respiratory chain that catalyzes the reduction of oxygen to water. Electrons originating from reduced cytochrome c in the intermembrane space (IMS) are transferred via the dinuclear copper A center (CU(A)) of subunit 2 and heme A of subunit 1 to the active site in subunit 1, a binuclear center (BNC) formed by heme A3 and copper B (CU(B)). The BNC reduces molecular oxygen to 2 water molecules using 4 electrons from cytochrome c in the IMS and 4 protons from the mitochondrial matrix. This is Cytochrome c oxidase subunit 3 (COX3) from Allomyces macrogynus.